The primary structure comprises 1647 residues: Ras GTPase-activating-like protein IQG1 (1647 aa).

The tract at residues 18-51 is disordered; sequence DTTATTTTTTTSNVLQPSNRLNSPTKFNRKSLDN. Residues 19-28 show a composition bias toward low complexity; the sequence is TTATTTTTTT. The span at 29–43 shows a compositional bias: polar residues; that stretch reads SNVLQPSNRLNSPTK. S48 bears the Phosphoserine mark. T66, T72, and T82 each carry phosphothreonine. 3 positions are modified to phosphoserine: S83, S91, and S139. Polar residues predominate over residues 143 to 162; it reads FNTQSNVHTPLKQLNQPIGT. A disordered region spans residues 143–175; sequence FNTQSNVHTPLKQLNQPIGTPSSSSLSPAKNAS. A compositionally biased stretch (low complexity) spans 163-175; that stretch reads PSSSSLSPAKNAS. Phosphoserine occurs at positions 165, 167, and 169. The Calponin-homology (CH) domain maps to 184-291; it reads LCRIEAIKQW…FCLHALSYIL (108 aa). The tract at residues 326–427 is disordered; sequence PLPNFSSADT…STSNAKLELH (102 aa). Low complexity predominate over residues 342–355; sequence TSNNNSSTTSATAA. A Phosphothreonine modification is found at T367. A compositionally biased stretch (low complexity) spans 368-379; the sequence is PSPLKRPQQLQK. S369 carries the phosphoserine modification. Composition is skewed to basic and acidic residues over residues 380–392 and 402–413; these read KQLE…KPEL and ISRDDPFTDRVD. 2 positions are modified to phosphoserine: S433 and S440. IQ domains are found at residues 467 to 478, 528 to 539, 556 to 567, 586 to 597, 616 to 627, 642 to 653, 672 to 683, 734 to 745, and 764 to 775; these read FQSLARGAVFRY, LQSIIRKNFVIN, LQSLIRGKLTRD, FQSLVRMKSIYS, LQSIARSQLYHR, IQSIIRRNAVIE, LQSIARGGVART, VQTLFRGVLSRY, and LQSVARGKLMRG. A coiled-coil region spans residues 841–919; it reads LSDLKDLIIE…KKIELWQTLF (79 aa). A Ras-GAP domain is found at 958–1223; sequence PVRDSSITYH…DTVKSIISQA (266 aa). Phosphoserine occurs at positions 1064, 1068, 1088, 1383, and 1385.

In terms of assembly, interacts with myosin MYO1 and its light chain MLC1. Interacts with BNI1. Interacts with BNR1. Interacts with CLB2. Interacts with CLB4. Interacts with CDC28. In terms of processing, hyperphosphorylated. Phosphorylation is cell cycle-dependent and peaks at the time of cytokinesis. Contains 21 consensus sites for cyclin-dependent kinases (CDKs). At least some of them are phosphorylated by the CLB2-CDC28 kinase complex. Mutation of 15 of the phosphorylation sites to Ala caused both premature assembly and delayed disassembly of the actomyosin ring, blocked interaction with the actin-nucleating proteins BNI1 and BNR1, and resulted in defects in cytokinesis.

The protein resides in the bud neck. In terms of biological role, required for the assembly and the contraction of the actomyosin ring at the bud neck during cytokinesis. The chain is Ras GTPase-activating-like protein IQG1 (IQG1) from Candida albicans (strain SC5314 / ATCC MYA-2876) (Yeast).